The following is a 198-amino-acid chain: Uracil phosphoribosyltransferase homolog (198 aa).

It belongs to the UPRTase family.

It localises to the plastid. The protein localises to the chloroplast. This is Uracil phosphoribosyltransferase homolog from Porphyra purpurea (Red seaweed).